A 163-amino-acid chain; its full sequence is ATP synthase subunit b (163 aa).

Residues 1–11 (MLWKANVWVLG) constitute a propeptide that is removed on maturation. Residues 16-36 (GISGGTIIYQLLMFIILLALL) form a helical membrane-spanning segment.

Belongs to the ATPase B chain family. In terms of assembly, F-type ATPases have 2 components, F(1) - the catalytic core - and F(0) - the membrane proton channel. F(1) has five subunits: alpha(3), beta(3), gamma(1), delta(1), epsilon(1). F(0) has three main subunits: a(1), b(2) and c(10-14). The alpha and beta chains form an alternating ring which encloses part of the gamma chain. F(1) is attached to F(0) by a central stalk formed by the gamma and epsilon chains, while a peripheral stalk is formed by the delta and b chains.

It is found in the cell membrane. Functionally, f(1)F(0) ATP synthase produces ATP from ADP in the presence of a proton or sodium gradient. F-type ATPases consist of two structural domains, F(1) containing the extramembraneous catalytic core and F(0) containing the membrane proton channel, linked together by a central stalk and a peripheral stalk. During catalysis, ATP synthesis in the catalytic domain of F(1) is coupled via a rotary mechanism of the central stalk subunits to proton translocation. Component of the F(0) channel, it forms part of the peripheral stalk, linking F(1) to F(0). This is ATP synthase subunit b from Bacillus sp. (strain PS3).